Consider the following 428-residue polypeptide: Peptidase B (428 aa).

2 residues coordinate Mn(2+): K195 and D200. K207 is an active-site residue. 3 residues coordinate Mn(2+): D218, D277, and E279. Residue R281 is part of the active site.

This sequence belongs to the peptidase M17 family. As to quaternary structure, homohexamer. The cofactor is Mn(2+).

Its subcellular location is the cytoplasm. It catalyses the reaction Release of an N-terminal amino acid, Xaa, from a peptide or arylamide. Xaa is preferably Glu or Asp but may be other amino acids, including Leu, Met, His, Cys and Gln.. Its function is as follows. Probably plays an important role in intracellular peptide degradation. In Klebsiella pneumoniae subsp. pneumoniae (strain ATCC 700721 / MGH 78578), this protein is Peptidase B.